A 253-amino-acid chain; its full sequence is Trans-aconitate 2-methyltransferase (253 aa).

The protein belongs to the methyltransferase superfamily. Tam family.

It is found in the cytoplasm. It carries out the reaction trans-aconitate + S-adenosyl-L-methionine = (E)-3-(methoxycarbonyl)pent-2-enedioate + S-adenosyl-L-homocysteine. Catalyzes the S-adenosylmethionine monomethyl esterification of trans-aconitate. This chain is Trans-aconitate 2-methyltransferase, found in Klebsiella pneumoniae (strain 342).